A 450-amino-acid chain; its full sequence is Phosphoglucosamine mutase 2 (450 aa).

Residue Ser-101 is the Phosphoserine intermediate of the active site. Ser-101, Asp-245, Asp-247, and Asp-249 together coordinate Mg(2+). The residue at position 101 (Ser-101) is a Phosphoserine.

Belongs to the phosphohexose mutase family. Requires Mg(2+) as cofactor. Activated by phosphorylation.

It carries out the reaction alpha-D-glucosamine 1-phosphate = D-glucosamine 6-phosphate. In terms of biological role, catalyzes the conversion of glucosamine-6-phosphate to glucosamine-1-phosphate. In Shewanella sp. (strain MR-4), this protein is Phosphoglucosamine mutase 2.